Consider the following 174-residue polypeptide: Beta-lactoglobulin (174 aa).

The signal sequence occupies residues 1–18; it reads MKFLLLTVGLTSICAIQA. Disulfide bonds link Cys79/Cys172 and Cys122/Cys134.

The protein belongs to the calycin superfamily. Lipocalin family. Monomer.

Its subcellular location is the secreted. Functionally, lactoglobulin is the primary component of whey, it binds retinol and is probably involved in the transport of that molecule. This chain is Beta-lactoglobulin (LGB), found in Trichosurus vulpecula (Brush-tailed possum).